Reading from the N-terminus, the 268-residue chain is Probable histidine-binding protein (268 aa).

The signal sequence occupies residues 1 to 20 (MNMKKWIAAALACSALALSA). The N-palmitoyl cysteine moiety is linked to residue cysteine 21. Cysteine 21 is lipidated: S-diacylglycerol cysteine.

The protein belongs to the bacterial solute-binding protein 3 family.

The protein resides in the cell membrane. Involved in histidine transport. This Neisseria gonorrhoeae protein is Probable histidine-binding protein (hisJ).